Here is a 529-residue protein sequence, read N- to C-terminus: Bifunctional purine biosynthesis protein PurH (529 aa).

The region spanning 1–148 (MQQRRPVRRA…KNHKDVAIVV (148 aa)) is the MGS-like domain. At K287 the chain carries N6-acetyllysine.

Belongs to the PurH family.

The catalysed reaction is (6R)-10-formyltetrahydrofolate + 5-amino-1-(5-phospho-beta-D-ribosyl)imidazole-4-carboxamide = 5-formamido-1-(5-phospho-D-ribosyl)imidazole-4-carboxamide + (6S)-5,6,7,8-tetrahydrofolate. It carries out the reaction IMP + H2O = 5-formamido-1-(5-phospho-D-ribosyl)imidazole-4-carboxamide. It participates in purine metabolism; IMP biosynthesis via de novo pathway; 5-formamido-1-(5-phospho-D-ribosyl)imidazole-4-carboxamide from 5-amino-1-(5-phospho-D-ribosyl)imidazole-4-carboxamide (10-formyl THF route): step 1/1. Its pathway is purine metabolism; IMP biosynthesis via de novo pathway; IMP from 5-formamido-1-(5-phospho-D-ribosyl)imidazole-4-carboxamide: step 1/1. The sequence is that of Bifunctional purine biosynthesis protein PurH from Escherichia coli O6:H1 (strain CFT073 / ATCC 700928 / UPEC).